A 383-amino-acid chain; its full sequence is Lipid-A-disaccharide synthase (383 aa).

This sequence belongs to the LpxB family.

The catalysed reaction is a lipid X + a UDP-2-N,3-O-bis[(3R)-3-hydroxyacyl]-alpha-D-glucosamine = a lipid A disaccharide + UDP + H(+). Its pathway is bacterial outer membrane biogenesis; LPS lipid A biosynthesis. Its function is as follows. Condensation of UDP-2,3-diacylglucosamine and 2,3-diacylglucosamine-1-phosphate to form lipid A disaccharide, a precursor of lipid A, a phosphorylated glycolipid that anchors the lipopolysaccharide to the outer membrane of the cell. The protein is Lipid-A-disaccharide synthase of Syntrophus aciditrophicus (strain SB).